Reading from the N-terminus, the 446-residue chain is Signal recognition particle protein (446 aa).

Residues 106 to 113, 188 to 192, and 246 to 249 contribute to the GTP site; these read GLQGSGKT, DTAGR, and SKLD.

This sequence belongs to the GTP-binding SRP family. SRP54 subfamily. In terms of assembly, part of the signal recognition particle protein translocation system, which is composed of SRP and FtsY.

It localises to the cytoplasm. The enzyme catalyses GTP + H2O = GDP + phosphate + H(+). Its function is as follows. Involved in targeting and insertion of nascent membrane proteins into the cytoplasmic membrane. Binds to the hydrophobic signal sequence of the ribosome-nascent chain (RNC) as it emerges from the ribosomes. The SRP-RNC complex is then targeted to the cytoplasmic membrane where it interacts with the SRP receptor FtsY. This is Signal recognition particle protein from Mycoplasma genitalium (strain ATCC 33530 / DSM 19775 / NCTC 10195 / G37) (Mycoplasmoides genitalium).